The chain runs to 179 residues: MANIAKKYAKALFDTAKDADILDDMYDEFSTINEAVQSENKKLQALDADPQKDVEQRRRFVSIVFGQTNQYLQNMLTILASNRHLGHIHEIYIAFETLYNEEHNQDYAVIESVYQLSEEELSSIEEIIKARTKLSKIMITNKINPELIGGIRVKVGTKVMDASIKNDLAQLERQFIRVK.

Belongs to the ATPase delta chain family. As to quaternary structure, F-type ATPases have 2 components, F(1) - the catalytic core - and F(0) - the membrane proton channel. F(1) has five subunits: alpha(3), beta(3), gamma(1), delta(1), epsilon(1). F(0) has three main subunits: a(1), b(2) and c(10-14). The alpha and beta chains form an alternating ring which encloses part of the gamma chain. F(1) is attached to F(0) by a central stalk formed by the gamma and epsilon chains, while a peripheral stalk is formed by the delta and b chains.

The protein resides in the cell membrane. In terms of biological role, f(1)F(0) ATP synthase produces ATP from ADP in the presence of a proton or sodium gradient. F-type ATPases consist of two structural domains, F(1) containing the extramembraneous catalytic core and F(0) containing the membrane proton channel, linked together by a central stalk and a peripheral stalk. During catalysis, ATP synthesis in the catalytic domain of F(1) is coupled via a rotary mechanism of the central stalk subunits to proton translocation. Functionally, this protein is part of the stalk that links CF(0) to CF(1). It either transmits conformational changes from CF(0) to CF(1) or is implicated in proton conduction. This is ATP synthase subunit delta from Staphylococcus saprophyticus subsp. saprophyticus (strain ATCC 15305 / DSM 20229 / NCIMB 8711 / NCTC 7292 / S-41).